We begin with the raw amino-acid sequence, 223 residues long: Uridylate kinase (223 aa).

Position 9–10 (9–10) interacts with ATP; sequence GS. Gly-42 provides a ligand contact to UMP. Positions 43 and 47 each coordinate ATP. UMP-binding positions include Asp-64 and 112-118; that span reads VSPGQTT. Residues Thr-138, Tyr-144, and Asp-147 each contribute to the ATP site.

The protein belongs to the UMP kinase family. As to quaternary structure, homohexamer.

Its subcellular location is the cytoplasm. The catalysed reaction is UMP + ATP = UDP + ADP. The protein operates within pyrimidine metabolism; CTP biosynthesis via de novo pathway; UDP from UMP (UMPK route): step 1/1. Its activity is regulated as follows. Inhibited by UTP. Its function is as follows. Catalyzes the reversible phosphorylation of UMP to UDP. The chain is Uridylate kinase from Methanothrix thermoacetophila (strain DSM 6194 / JCM 14653 / NBRC 101360 / PT) (Methanosaeta thermophila).